A 309-amino-acid chain; its full sequence is Zinc transporter ZIP2 (309 aa).

Over 1 to 8 (MEQLLGIK) the chain is Extracellular. Residues 9–29 (LGCLFALLALTLGCGLTPICF) form a helical membrane-spanning segment. At 30-46 (KWFQIDAARGHHRLVLR) the chain is on the cytoplasmic side. The chain crosses the membrane as a helical span at residues 47–67 (LLGCISAGVFLGAGFMHMTAE). At 68–103 (ALEEIESQIQKFMVQNRSASERNSSGDADSAHMEYP) the chain is on the extracellular side. A helical membrane pass occupies residues 104–124 (YGELIISLGFFFVFFLESLAL). The Cytoplasmic portion of the chain corresponds to 125–164 (QCCPGAAGGSTVQDEEWGGAHIFELHSHGHLPSPSKGPLR). A helical membrane pass occupies residues 165 to 185 (ALVLLLSLSFHSVFEGLAVGL). Residues His-175 and Glu-179 each coordinate Zn(2+). At 186–189 (QPTV) the chain is on the extracellular side. The chain crosses the membrane as a helical span at residues 190–210 (AATVQLCLAVLAHKGLVVFGV). A Zn(2+)-binding site is contributed by His-202. The Cytoplasmic segment spans residues 211 to 224 (GMRLVHLGTSSRWA). The chain crosses the membrane as a helical span at residues 225-245 (VFSILLLALMSPLGLAVGLAV). Residues 246-258 (TGGDSEGGRGLAQ) are Extracellular-facing. The helical transmembrane segment at 259–279 (AVLEGVAAGTFLYVTFLEILP) threads the bilayer. Glu-276 contacts Zn(2+). At 280–288 (RELASPEAP) the chain is on the cytoplasmic side. A helical transmembrane segment spans residues 289-309 (LAKWSCVAAGFAFMAFIALWA).

It belongs to the ZIP transporter (TC 2.A.5) family. As to expression, expressed only in prostate and uterine epithelial cells.

Its subcellular location is the cell membrane. The catalysed reaction is Zn(2+)(in) = Zn(2+)(out). It carries out the reaction Cd(2+)(in) = Cd(2+)(out). Its activity is regulated as follows. Activity is increased at acidic pH (6.5). Inhibited in the presence of high extracellular K(+). In terms of biological role, transporter for the divalent cation Zn(2+). Mediates the influx of Zn(2+) into cells from extracellular space. The Zn(2+) uniporter activity is independent of H(+)-driving force, but is modulated by extracellular pH and membrane potential. Also transports other divalent cations Zn(2+), Cd2(+), Cu2(+), Co2(+) in the order of decreasing affinity, respectively. In the skin, aids in the differentiation of keratinocytes in the epidermis. The chain is Zinc transporter ZIP2 from Homo sapiens (Human).